Here is a 408-residue protein sequence, read N- to C-terminus: Subtilisin-like protease 6 (408 aa).

The N-terminal stretch at 1 to 20 (MGFITKAIPIVLAALSTVDG) is a signal peptide. The propeptide occupies 21 to 123 (AKILEAGPHA…RDTVVKATAI (103 aa)). The region spanning 36–119 (KYIVVMKQDV…DFIERDTVVK (84 aa)) is the Inhibitor I9 domain. One can recognise a Peptidase S8 domain in the interval 131–408 (SWGLARVGSK…GKLIYNGSGK (278 aa)). Catalysis depends on charge relay system residues Asp163 and His194. N-linked (GlcNAc...) asparagine glycans are attached at residues Asn248, Asn260, and Asn345. The Charge relay system role is filled by Ser354. Asn404 is a glycosylation site (N-linked (GlcNAc...) asparagine).

It belongs to the peptidase S8 family.

It is found in the secreted. Its function is as follows. Secreted subtilisin-like serine protease with keratinolytic activity that contributes to pathogenicity. The chain is Subtilisin-like protease 6 (SUB6) from Arthroderma gypseum (strain ATCC MYA-4604 / CBS 118893) (Microsporum gypseum).